We begin with the raw amino-acid sequence, 577 residues long: Glycine--tRNA ligase (577 aa).

Substrate is bound by residues Arg98 and Glu164. ATP-binding positions include 196-198 (RNE), 206-211 (IRLREF), 328-329 (EC), and 451-454 (GIDR). 211-215 (FTQAE) is a substrate binding site. 447 to 451 (EPSYG) lines the substrate pocket.

This sequence belongs to the class-II aminoacyl-tRNA synthetase family.

The protein resides in the cytoplasm. The enzyme catalyses tRNA(Gly) + glycine + ATP = glycyl-tRNA(Gly) + AMP + diphosphate. Its function is as follows. Catalyzes the attachment of glycine to tRNA(Gly). The protein is Glycine--tRNA ligase of Methanocaldococcus jannaschii (strain ATCC 43067 / DSM 2661 / JAL-1 / JCM 10045 / NBRC 100440) (Methanococcus jannaschii).